The primary structure comprises 174 residues: Crossover junction endodeoxyribonuclease RuvC (174 aa).

Catalysis depends on residues aspartate 8, glutamate 67, and aspartate 139. 3 residues coordinate Mg(2+): aspartate 8, glutamate 67, and aspartate 139.

Belongs to the RuvC family. As to quaternary structure, homodimer which binds Holliday junction (HJ) DNA. The HJ becomes 2-fold symmetrical on binding to RuvC with unstacked arms; it has a different conformation from HJ DNA in complex with RuvA. In the full resolvosome a probable DNA-RuvA(4)-RuvB(12)-RuvC(2) complex forms which resolves the HJ. Mg(2+) is required as a cofactor.

The protein resides in the cytoplasm. It carries out the reaction Endonucleolytic cleavage at a junction such as a reciprocal single-stranded crossover between two homologous DNA duplexes (Holliday junction).. Its function is as follows. The RuvA-RuvB-RuvC complex processes Holliday junction (HJ) DNA during genetic recombination and DNA repair. Endonuclease that resolves HJ intermediates. Cleaves cruciform DNA by making single-stranded nicks across the HJ at symmetrical positions within the homologous arms, yielding a 5'-phosphate and a 3'-hydroxyl group; requires a central core of homology in the junction. The consensus cleavage sequence is 5'-(A/T)TT(C/G)-3'. Cleavage occurs on the 3'-side of the TT dinucleotide at the point of strand exchange. HJ branch migration catalyzed by RuvA-RuvB allows RuvC to scan DNA until it finds its consensus sequence, where it cleaves and resolves the cruciform DNA. The chain is Crossover junction endodeoxyribonuclease RuvC from Pseudomonas savastanoi pv. phaseolicola (strain 1448A / Race 6) (Pseudomonas syringae pv. phaseolicola (strain 1448A / Race 6)).